A 419-amino-acid chain; its full sequence is Tyrosine--tRNA ligase 2 (419 aa).

Tyr-34 contributes to the L-tyrosine binding site. Residues 39–48 (PTGDSMHIGH) carry the 'HIGH' region motif. L-tyrosine contacts are provided by Tyr-168 and Gln-172. The 'KMSKS' region motif lies at 230–234 (KFGKS). Position 233 (Lys-233) interacts with ATP. An S4 RNA-binding domain is found at 352-418 (KNIVEWLVDL…GKKNYSLVKL (67 aa)).

It belongs to the class-I aminoacyl-tRNA synthetase family. TyrS type 1 subfamily. Homodimer.

The protein resides in the cytoplasm. The catalysed reaction is tRNA(Tyr) + L-tyrosine + ATP = L-tyrosyl-tRNA(Tyr) + AMP + diphosphate + H(+). In terms of biological role, catalyzes the attachment of tyrosine to tRNA(Tyr) in a two-step reaction: tyrosine is first activated by ATP to form Tyr-AMP and then transferred to the acceptor end of tRNA(Tyr). The protein is Tyrosine--tRNA ligase 2 of Bacillus cereus (strain ATCC 10987 / NRS 248).